Consider the following 586-residue polypeptide: Anaerobic glycerol-3-phosphate dehydrogenase subunit A1 (586 aa).

6-34 (SVLVIGGGSTGTGIARDLAMRGLDVTLVE) is an FAD binding site. The tract at residues 559 to 586 (GGAVADGGRERAADRADDDALGGADGDN) is disordered. The segment covering 574-586 (ADDDALGGADGDN) has biased composition (acidic residues).

It belongs to the FAD-dependent glycerol-3-phosphate dehydrogenase family. In terms of assembly, composed of a catalytic GlpA/B dimer and of membrane bound GlpC. Requires FAD as cofactor. It depends on FMN as a cofactor.

The protein localises to the cell membrane. The catalysed reaction is a quinone + sn-glycerol 3-phosphate = dihydroxyacetone phosphate + a quinol. It functions in the pathway polyol metabolism; glycerol degradation via glycerol kinase pathway; glycerone phosphate from sn-glycerol 3-phosphate (anaerobic route): step 1/1. Its activity is regulated as follows. Up-regulated by glycerol and no inhibition by glucose. Functionally, conversion of glycerol 3-phosphate to dihydroxyacetone phosphate. Required for growth on glycerol and for glycerol metabolism. This Haloferax volcanii (strain ATCC 29605 / DSM 3757 / JCM 8879 / NBRC 14742 / NCIMB 2012 / VKM B-1768 / DS2) (Halobacterium volcanii) protein is Anaerobic glycerol-3-phosphate dehydrogenase subunit A1 (gpdA1).